The primary structure comprises 499 residues: Ribose import ATP-binding protein RbsA (499 aa).

2 consecutive ABC transporter domains span residues Val3–Ala240 and Leu250–Asp494. An ATP-binding site is contributed by Gly35–Ser42.

The protein belongs to the ABC transporter superfamily. Ribose importer (TC 3.A.1.2.1) family. As to quaternary structure, the complex is composed of an ATP-binding protein (RbsA), two transmembrane proteins (RbsC) and a solute-binding protein (RbsB).

The protein localises to the cell membrane. The enzyme catalyses D-ribose(out) + ATP + H2O = D-ribose(in) + ADP + phosphate + H(+). Part of the ABC transporter complex RbsABC involved in ribose import. Responsible for energy coupling to the transport system. This is Ribose import ATP-binding protein RbsA from Halalkalibacterium halodurans (strain ATCC BAA-125 / DSM 18197 / FERM 7344 / JCM 9153 / C-125) (Bacillus halodurans).